The sequence spans 30 residues: Matrix Gla protein (30 aa).

3 positions are modified to phosphoserine: S2, S3, and S5.

This sequence belongs to the osteocalcin/matrix Gla protein family. In terms of processing, requires vitamin K-dependent gamma-carboxylation for its function.

Its subcellular location is the secreted. Its function is as follows. Associates with the organic matrix of calcified cartilage. In Prionace glauca (Blue shark), this protein is Matrix Gla protein (mgp).